The following is a 723-amino-acid chain: Catalase-peroxidase (723 aa).

Positions 96 to 224 form a cross-link, tryptophyl-tyrosyl-methioninium (Trp-Tyr) (with M-250); that stretch reads WHAAGTYRIQ…LAAVQMGLIY (129 aa). His97 functions as the Proton acceptor in the catalytic mechanism. Residues 224–250 constitute a cross-link (tryptophyl-tyrosyl-methioninium (Tyr-Met) (with W-96)); that stretch reads YVNPEGVNSQPDPIKTGEQVRVTFARM. His265 contributes to the heme b binding site.

Belongs to the peroxidase family. Peroxidase/catalase subfamily. Homodimer or homotetramer. Heme b is required as a cofactor. In terms of processing, formation of the three residue Trp-Tyr-Met cross-link is important for the catalase, but not the peroxidase activity of the enzyme.

The catalysed reaction is H2O2 + AH2 = A + 2 H2O. It catalyses the reaction 2 H2O2 = O2 + 2 H2O. In terms of biological role, bifunctional enzyme with both catalase and broad-spectrum peroxidase activity. The protein is Catalase-peroxidase of Marinobacter nauticus (strain ATCC 700491 / DSM 11845 / VT8) (Marinobacter aquaeolei).